The following is a 116-amino-acid chain: Ig heavy chain V region 441 (116 aa).

A signal peptide spans 1 to 18 (MDFGLIFFIVALLKGVQC). Residues 19 to 116 (EVKLLESGGG…EDTALYYCAR (98 aa)) enclose the Ig-like domain.

This is Ig heavy chain V region 441 from Mus musculus (Mouse).